Reading from the N-terminus, the 293-residue chain is Cytosolic Fe-S cluster assembly factor CFD1 (293 aa).

25–32 is a binding site for ATP; the sequence is GKGGVGKS. Positions 201 and 204 each coordinate [4Fe-4S] cluster. Ser-291 carries the phosphoserine modification.

This sequence belongs to the Mrp/NBP35 ATP-binding proteins family. NUBP2/CFD1 subfamily. In terms of assembly, heterotetramer of 2 NBP35 and 2 CFD1 chains. The cofactor is [4Fe-4S] cluster.

It is found in the cytoplasm. Functionally, component of the cytosolic iron-sulfur (Fe/S) protein assembly (CIA) machinery. Required for maturation of extramitochondrial Fe-S proteins. The NBP35-CFD1 heterotetramer forms a Fe-S scaffold complex, mediating the de novo assembly of an Fe-S cluster and its transfer to target apoproteins. Nucleotide binding/hydrolysis seems to be critcal for loading of Fe-S clusters onto CFD1 and NBP35. Required for biogenesis and export of both ribosomal subunits, which may reflect a role in assembly of the Fe/S clusters in RLI1, a protein which performs rRNA processing and ribosome export. The sequence is that of Cytosolic Fe-S cluster assembly factor CFD1 from Saccharomyces cerevisiae (strain ATCC 204508 / S288c) (Baker's yeast).